The following is a 391-amino-acid chain: Probable sugar efflux transporter (391 aa).

The next 12 helical transmembrane spans lie at 16–36, 51–71, 82–102, 103–123, 138–158, 170–190, 210–230, 247–267, 277–297, 300–320, 338–358, and 361–381; these read VFVFSLSAFIFNTTEFVPVAL, VGLMITAYAWVVSLGSLPLML, LLFLFALFILSHILSALAWNF, WVLLISRMGIAFAHSIFWSIT, QALGLLALGSSLAMILGLPLG, TFGVIGGVATLIMLLMWKLLP, PLLVGIYLLVIMVISGHFTTY, ITTLMLFVFGLAGVAGSFLFG, FIAFAMVLVICPQLLLFVFKN, WVIFLQIFLWGIGITSLTIAL, IFSGSYNVGIGSGALFGSIVI, and LGLEYIGFVGGALGLLALFWL.

This sequence belongs to the major facilitator superfamily. SotB (TC 2.A.1.2) family.

Its subcellular location is the cell inner membrane. In terms of biological role, involved in the efflux of sugars. The physiological role may be the reduction of the intracellular concentration of toxic sugars or sugar metabolites. This Helicobacter pylori (strain P12) protein is Probable sugar efflux transporter.